The chain runs to 145 residues: Histone H2B.7 (145 aa).

Residues 1–30 (MAPKAEKKPAEKKPVEEKSKAEKAPAEKKP) show a composition bias toward basic and acidic residues. The tract at residues 1 to 53 (MAPKAEKKPAEKKPVEEKSKAEKAPAEKKPKAGKKLPKEAGAGGDKKKKMKKK) is disordered. A2 carries the post-translational modification N,N,N-trimethylalanine; alternate. N,N-dimethylalanine; alternate is present on A2. A2 is subject to N-methylalanine; alternate. At K4 the chain carries N6-methyllysine; partial. N6-acetyllysine is present on residues K7 and K12. Position 13 is an N6,N6-dimethyllysine (K13). N6-acetyllysine occurs at positions 23, 28, and 34. An N6-acetyllysine; partial modification is found at K35. Residue K141 forms a Glycyl lysine isopeptide (Lys-Gly) (interchain with G-Cter in ubiquitin) linkage.

The protein belongs to the histone H2B family. The nucleosome is a histone octamer containing two molecules each of H2A, H2B, H3 and H4 assembled in one H3-H4 heterotetramer and two H2A-H2B heterodimers. The octamer wraps approximately 147 bp of DNA. Post-translationally, can be acetylated to form H2BK6ac, H2BK11ac, H2BK22ac, H2BK27ac H2BK33ac and H2BK34ac. Mono-, di- or trimethylated at the N-terminus to form H2BA1me1/2/3. H2BA1me2 and H2BA1me3 may be methylated and/or acetylated to form H2BA1me2K3me1, H2BA1me2K3me1K6ac, H2BA1me2K6ac H2BA1me3K6ac, H2BA1me3K6acK11ac and H2BA1me2K3me1K6acK11ac. In terms of processing, monoubiquitinated by BRE1 to form H2BK143ub1 and deubiquitinated by UBP26. Required for heterochromatic histone H3 di- and trimethylation at H3K4me. May give a specific tag for epigenetic transcriptional activation.

The protein resides in the nucleus. It is found in the chromosome. Functionally, core component of nucleosome. Nucleosomes wrap and compact DNA into chromatin, limiting DNA accessibility to the cellular machineries which require DNA as a template. Histones thereby play a central role in transcription regulation, DNA repair, DNA replication and chromosomal stability. DNA accessibility is regulated via a complex set of post-translational modifications of histones, also called histone code, and nucleosome remodeling. The chain is Histone H2B.7 from Arabidopsis thaliana (Mouse-ear cress).